A 498-amino-acid chain; its full sequence is Glycerol kinase (498 aa).

Threonine 12 is a binding site for ADP. ATP-binding residues include threonine 12, threonine 13, and serine 14. Threonine 12 provides a ligand contact to sn-glycerol 3-phosphate. Arginine 16 is a binding site for ADP. Positions 82, 83, and 134 each coordinate sn-glycerol 3-phosphate. Residues arginine 82, glutamate 83, and tyrosine 134 each coordinate glycerol. A Phosphohistidine; by HPr modification is found at histidine 230. A sn-glycerol 3-phosphate-binding site is contributed by aspartate 244. 2 residues coordinate glycerol: aspartate 244 and glutamine 245. ADP contacts are provided by threonine 266 and glycine 309. ATP is bound by residues threonine 266, glycine 309, glutamine 313, and glycine 410. Residues glycine 410 and asparagine 414 each contribute to the ADP site.

This sequence belongs to the FGGY kinase family. Homotetramer and homodimer (in equilibrium). In terms of processing, the phosphoenolpyruvate-dependent sugar phosphotransferase system (PTS), including enzyme I, and histidine-containing protein (HPr) are required for the phosphorylation, which leads to the activation of the enzyme.

The catalysed reaction is glycerol + ATP = sn-glycerol 3-phosphate + ADP + H(+). It participates in polyol metabolism; glycerol degradation via glycerol kinase pathway; sn-glycerol 3-phosphate from glycerol: step 1/1. With respect to regulation, activated by phosphorylation and inhibited by fructose 1,6-bisphosphate (FBP). Key enzyme in the regulation of glycerol uptake and metabolism. Catalyzes the phosphorylation of glycerol to yield sn-glycerol 3-phosphate. This Staphylococcus aureus (strain Mu50 / ATCC 700699) protein is Glycerol kinase.